We begin with the raw amino-acid sequence, 204 residues long: ATP phosphoribosyltransferase (204 aa).

The protein belongs to the ATP phosphoribosyltransferase family. Short subfamily. In terms of assembly, heteromultimer composed of HisG and HisZ subunits.

The protein resides in the cytoplasm. The catalysed reaction is 1-(5-phospho-beta-D-ribosyl)-ATP + diphosphate = 5-phospho-alpha-D-ribose 1-diphosphate + ATP. It functions in the pathway amino-acid biosynthesis; L-histidine biosynthesis; L-histidine from 5-phospho-alpha-D-ribose 1-diphosphate: step 1/9. In terms of biological role, catalyzes the condensation of ATP and 5-phosphoribose 1-diphosphate to form N'-(5'-phosphoribosyl)-ATP (PR-ATP). Has a crucial role in the pathway because the rate of histidine biosynthesis seems to be controlled primarily by regulation of HisG enzymatic activity. This chain is ATP phosphoribosyltransferase, found in Staphylococcus aureus (strain bovine RF122 / ET3-1).